Here is a 372-residue protein sequence, read N- to C-terminus: Chorismate synthase (372 aa).

Residues R48 and R54 each coordinate NADP(+). FMN-binding positions include 125–127 (RSS), 238–239 (NA), G278, 293–297 (KPTSS), and R319.

The protein belongs to the chorismate synthase family. As to quaternary structure, homotetramer. It depends on FMNH2 as a cofactor.

The catalysed reaction is 5-O-(1-carboxyvinyl)-3-phosphoshikimate = chorismate + phosphate. Its pathway is metabolic intermediate biosynthesis; chorismate biosynthesis; chorismate from D-erythrose 4-phosphate and phosphoenolpyruvate: step 7/7. Its function is as follows. Catalyzes the anti-1,4-elimination of the C-3 phosphate and the C-6 proR hydrogen from 5-enolpyruvylshikimate-3-phosphate (EPSP) to yield chorismate, which is the branch point compound that serves as the starting substrate for the three terminal pathways of aromatic amino acid biosynthesis. This reaction introduces a second double bond into the aromatic ring system. The protein is Chorismate synthase of Xylella fastidiosa (strain 9a5c).